We begin with the raw amino-acid sequence, 750 residues long: Retron Eco8 OLD nuclease (750 aa).

The interval 1-173 (MTIESIRVKN…IDLYDWNPIW (173 aa)) is ATPase domain N-terminus. 33 to 37 (NVGKS) is an ATP binding site. A dimerization domain region spans residues 174–260 (KLISNLNSFN…TQSDGTNSNK (87 aa)). The tract at residues 261 to 390 (FLETLLHLLI…FSDNEARLFF (130 aa)) is ATPase domain C-terminus. The interval 391–704 (SEYIVFVEGA…SGWVTTFLNY (314 aa)) is toprim domain. A divalent metal cation contacts are provided by Glu-398, Glu-402, Asp-450, Asp-452, Ser-623, and Glu-641.

Belongs to the class 1 OLD nuclease family. Homodimer. Requires a divalent metal cation as cofactor.

Functionally, probable nuclease member of antiviral defense system retron Eco8, composed of an reverse transcriptase (RT), this nuclease and a non-coding RNA (ncRNA) encoded between them. Expression of retron Eco8 confers protection against bacteriophages T4, T6, T7 and SECphi4, SECphi6 and SECphi18. At multiplicity of infection (MOI) of 0.02 cultures slow growth when infected with SECphi4 but do not collapse, at MOI 2 cultures collapse. When the retron is cloned in another E.coli strain synthesizes msDNA (a branched RNA linked by a 2',5'-phosphodiester bond to a single-stranded DNA). The retron transcript serves as primer and template to the reaction, and codes for the RT. This is Retron Eco8 OLD nuclease from Escherichia coli.